A 456-amino-acid chain; its full sequence is MEDLDALLSDLETTTSHMPRSGALKERPPEPLTSPLTQMGPGESSGASGDKDHLYSTVCKPRSPKPAAPATPPFSSSCGVLGTGLCELDRLLQELNATQFNITDEIMSQFPSSKETAGEQKEDQSEDKKRPSPPPSPSPVLPKPSATSATLELDRLMASLSDFRVQNHLPASGPTPPPVPSSMSEDTPSPPGPTSKGSLDTMLGLLQSDLSRRGVPTQAKGLCGSCNKPIAGQVVTALGRAWHPEHFVCGGCSTALGGSSFFEKDGAPFCPECYFERFSPRCGLCNQPIRHKMVTALGTHWHPEHFCCVSCGEPFGDEGFHEREGRPYCRRDFLQLFAPRCQGCQGPILDNYISALSALWHPDCFVCRECFAPFSGGSFFEHEGRPLCENHFHARRGSLCATCGLPVTGRCVSALGRRFHPDHFTCTFCLRPLTKGSFQERAGKPYCQPCFLKLFG.

M1 bears the N-acetylmethionine mark. The interval 1–79 is disordered; the sequence is MEDLDALLSD…ATPPFSSSCG (79 aa). The interval 1-195 is transcription activation; that stretch reads MEDLDALLSD…DTPSPPGPTS (195 aa). An interaction with PTK2B/PYK2 region spans residues 1–235; sequence MEDLDALLSD…CNKPIAGQVV (235 aa). Positions 3–15 match the LD motif 1 motif; it reads DLDALLSDLETTT. Phosphothreonine is present on T33. A Phosphotyrosine modification is found at Y55. S63 carries the phosphoserine modification. Residues 78 to 131 are interaction with PTK2/FAK1; the sequence is CGVLGTGLCELDRLLQELNATQFNITDEIMSQFPSSKETAGEQKEDQSEDKKRP. An LD motif 2 motif is present at residues 87–99; the sequence is ELDRLLQELNATQ. The interval 109 to 146 is disordered; sequence QFPSSKETAGEQKEDQSEDKKRPSPPPSPSPVLPKPSA. The span at 116 to 130 shows a compositional bias: basic and acidic residues; the sequence is TAGEQKEDQSEDKKR. S132, S136, S138, S159, S181, and S189 each carry phosphoserine. A compositionally biased stretch (pro residues) spans 132–142; it reads SPPPSPSPVLP. The LD motif 3 motif lies at 152–163; the sequence is ELDRLMASLSDF. Positions 166 to 200 are disordered; sequence QNHLPASGPTPPPVPSSMSEDTPSPPGPTSKGSLD. An LD motif 4 motif is present at residues 198-210; that stretch reads SLDTMLGLLQSDL. LIM zinc-binding domains are found at residues 221-280, 281-338, 339-398, and 399-456; these read GLCG…RFSP, RCGL…QLFA, PRCQ…RRGS, and LCAT…KLFG. S398 carries the post-translational modification Phosphoserine. T402 carries the post-translational modification Phosphothreonine.

Belongs to the paxillin family. In terms of assembly, homooligomer. Interacts with CRIP2, HSPB1, ILK, LIMS1, LIMS2, NCK2, NUDT16L1, PAK, PPARG, PTPN12, TCF3, TCF7L2 and VCL. Forms a complex with GIT1 and ARHGEF7. Interacts with AR/androgen receptor in a ligand-dependent manner. Interacts with CSK, LYN, MAPK15, NR3C1, PPARG, PTK2/FAK1, PTK2B/PYK2, SLC6A3, SLC6A4, SMAD3, SRC and talin. Interacts (via LIM zinc-binding domain 2) with CBLC (via RING-type zinc finger); the interaction is direct and enhances CBLC E3 ubiquitin-protein ligase activity. In terms of processing, phosphorylated by gonadotropin-releasing hormone-activated SRC.

Its subcellular location is the cell junction. It is found in the focal adhesion. The protein resides in the nucleus matrix. The protein localises to the cytoplasm. It localises to the cytoskeleton. Functionally, functions as a molecular adapter coordinating multiple protein-protein interactions at the focal adhesion complex and in the nucleus. Links various intracellular signaling modules to plasma membrane receptors and regulates the Wnt and TGFB signaling pathways. May also regulate SLC6A3 and SLC6A4 targeting to the plasma membrane hence regulating their activity. In the nucleus, functions as a nuclear receptor coactivator regulating glucocorticoid, androgen, mineralocorticoid and progesterone receptor transcriptional activity. May play a role in the processes of cell growth, proliferation, migration, differentiation and senescence. May have a zinc-dependent DNA-binding activity. The chain is Transforming growth factor beta-1-induced transcript 1 protein (TGFB1I1) from Bos taurus (Bovine).